Consider the following 297-residue polypeptide: Cyclin-dependent kinase 1 (297 aa).

The Protein kinase domain occupies 4 to 293; the sequence is YQKVEKIGEG…AKRALQQNYL (290 aa). ATP-binding positions include 10–18 and Lys-33; that span reads IGEGTYGVV. Thr-14 carries the phosphothreonine modification. Tyr-15 carries the phosphotyrosine modification. The Proton acceptor role is filled by Asp-134. A Phosphothreonine modification is found at Thr-167.

Belongs to the protein kinase superfamily. CMGC Ser/Thr protein kinase family. CDC2/CDKX subfamily. As to quaternary structure, forms a stable but non-covalent complex with regulatory subunit suc1 and with a cyclin. Interacts with cyclin cdc13. Interacts with cyclin cig2. Interacts with cdc37.

Its subcellular location is the cytoplasm. The catalysed reaction is L-seryl-[protein] + ATP = O-phospho-L-seryl-[protein] + ADP + H(+). The enzyme catalyses L-threonyl-[protein] + ATP = O-phospho-L-threonyl-[protein] + ADP + H(+). Phosphorylation at Thr-14 or Tyr-15 inactivates the enzyme, while phosphorylation at Thr-167 activates it. Cyclin-dependent kinase that acts as a master regulator of the mitotic and meiotic cell cycles. Required to drive the G1-S and G2-M transitions, and initiation of premeiotic DNA replication and meiosis II. More than 200 substrates have been identified. Substrate specificity is in part regulated by the bound cyclin protein. When complexed with cyclin cig2, it drives the G1-S phase transition. When complexed with cyclin cdc13, it drives the G2-M transition and initiation of meiosis II. Its activity rises throughout the cell cycle and substrate specificity is further influenced by activity thresholds with more sensitive substrates phosphorylated earlier in the cell cycle than less sensitive substrates. Phosphorylates dis1 during metaphase to ensure proper microtubule dynamics and accurate chromosome segregation. Phosphorylates the repetitive C-terminus of the large subunit of RNA polymerase II rpb1. Inactivated by checkpoint signaling following detection of cellular damage, leading to cell cycle arrest to allow damage repair. Inactivated during G2 DNA damage checkpoint signaling. Inactivated in response to defective RNA splicing. This Schizosaccharomyces pombe (strain 972 / ATCC 24843) (Fission yeast) protein is Cyclin-dependent kinase 1.